The following is a 134-amino-acid chain: D-ribose pyranase (134 aa).

The active-site Proton donor is His20. Substrate contacts are provided by residues Asp28, His101, and Tyr123–Asn125.

It belongs to the RbsD / FucU family. RbsD subfamily. Homodecamer.

Its subcellular location is the cytoplasm. The catalysed reaction is beta-D-ribopyranose = beta-D-ribofuranose. It functions in the pathway carbohydrate metabolism; D-ribose degradation; D-ribose 5-phosphate from beta-D-ribopyranose: step 1/2. In terms of biological role, catalyzes the interconversion of beta-pyran and beta-furan forms of D-ribose. This is D-ribose pyranase from Pseudomonas syringae pv. tomato (strain ATCC BAA-871 / DC3000).